The primary structure comprises 66 residues: Large ribosomal subunit protein bL33c (66 aa).

The protein belongs to the bacterial ribosomal protein bL33 family.

Its subcellular location is the plastid. It is found in the chloroplast. This Aethionema grandiflorum (Persian stone-cress) protein is Large ribosomal subunit protein bL33c.